Reading from the N-terminus, the 144-residue chain is Large ribosomal subunit protein uL13 (144 aa).

It belongs to the universal ribosomal protein uL13 family. As to quaternary structure, part of the 50S ribosomal subunit.

Functionally, this protein is one of the early assembly proteins of the 50S ribosomal subunit, although it is not seen to bind rRNA by itself. It is important during the early stages of 50S assembly. This Clostridium perfringens (strain ATCC 13124 / DSM 756 / JCM 1290 / NCIMB 6125 / NCTC 8237 / Type A) protein is Large ribosomal subunit protein uL13.